Reading from the N-terminus, the 255-residue chain is Octanoyltransferase (255 aa).

Residues 1–27 form a disordered region; that stretch reads MPPASDAHAAPDAAASTSASPQSCAAP. Residues 59–240 enclose the BPL/LPL catalytic domain; it reads PDTGDEIWVV…RLIANLDGAT (182 aa). Residues 99–106, 171–173, and 184–186 contribute to the substrate site; these read RGGQITYH, ALG, and GLS. C202 serves as the catalytic Acyl-thioester intermediate.

This sequence belongs to the LipB family.

The protein resides in the cytoplasm. It catalyses the reaction octanoyl-[ACP] + L-lysyl-[protein] = N(6)-octanoyl-L-lysyl-[protein] + holo-[ACP] + H(+). It functions in the pathway protein modification; protein lipoylation via endogenous pathway; protein N(6)-(lipoyl)lysine from octanoyl-[acyl-carrier-protein]: step 1/2. Functionally, catalyzes the transfer of endogenously produced octanoic acid from octanoyl-acyl-carrier-protein onto the lipoyl domains of lipoate-dependent enzymes. Lipoyl-ACP can also act as a substrate although octanoyl-ACP is likely to be the physiological substrate. The chain is Octanoyltransferase from Burkholderia thailandensis (strain ATCC 700388 / DSM 13276 / CCUG 48851 / CIP 106301 / E264).